We begin with the raw amino-acid sequence, 614 residues long: Acetylcholinesterase (614 aa).

Positions 1 to 31 (MRPPWYPLHTPSLASPLLFLLLSLLGGGARA) are cleaved as a signal peptide. The cysteines at positions 100 and 127 are disulfide-linked. The active-site Acyl-ester intermediate is Ser234. Cys288 and Cys303 are disulfide-bonded. A glycan (N-linked (GlcNAc...) asparagine) is linked at Asn296. Glu365 serves as the catalytic Charge relay system. N-linked (GlcNAc...) asparagine glycosylation is present at Asn381. A disulfide bond links Cys440 and Cys560. The Charge relay system role is filled by His478. Asn495 is a glycosylation site (N-linked (GlcNAc...) asparagine).

Belongs to the type-B carboxylesterase/lipase family. As to quaternary structure, homotetramer; composed of disulfide-linked homodimers. Catalytic forms H (GPI-anchor dimer) and T (asymmetric collagen-tailed), which differ in their C-terminus, account for all types of known ACHE forms. Interacts with PRIMA1. The interaction with PRIMA1 is required to anchor it to the basal lamina of cells and organize into tetramers. In terms of tissue distribution, has been found in central nervous system and muscle. Found in embryonic liver and spleen but not in adult liver.

It localises to the synapse. The protein resides in the secreted. It is found in the cell membrane. The enzyme catalyses acetylcholine + H2O = choline + acetate + H(+). Functionally, terminates signal transduction at the neuromuscular junction by rapid hydrolysis of the acetylcholine released into the synaptic cleft. The chain is Acetylcholinesterase (Ache) from Rattus norvegicus (Rat).